The sequence spans 318 residues: Pyrimidine-specific ribonucleoside hydrolase RihA (318 aa).

His-240 is a catalytic residue.

This sequence belongs to the IUNH family. RihA subfamily.

In terms of biological role, hydrolyzes cytidine or uridine to ribose and cytosine or uracil, respectively. The sequence is that of Pyrimidine-specific ribonucleoside hydrolase RihA from Shewanella sp. (strain ANA-3).